Consider the following 397-residue polypeptide: Protein irld-34 (397 aa).

This Caenorhabditis elegans protein is Protein irld-34.